The sequence spans 192 residues: Xanthine phosphoribosyltransferase (192 aa).

The xanthine site is built by leucine 20 and asparagine 27. 128–132 serves as a coordination point for 5-phospho-alpha-D-ribose 1-diphosphate; that stretch reads ANGQA. Lysine 156 serves as a coordination point for xanthine.

It belongs to the purine/pyrimidine phosphoribosyltransferase family. Xpt subfamily. Homodimer.

The protein localises to the cytoplasm. It catalyses the reaction XMP + diphosphate = xanthine + 5-phospho-alpha-D-ribose 1-diphosphate. It functions in the pathway purine metabolism; XMP biosynthesis via salvage pathway; XMP from xanthine: step 1/1. In terms of biological role, converts the preformed base xanthine, a product of nucleic acid breakdown, to xanthosine 5'-monophosphate (XMP), so it can be reused for RNA or DNA synthesis. This chain is Xanthine phosphoribosyltransferase, found in Listeria innocua serovar 6a (strain ATCC BAA-680 / CLIP 11262).